We begin with the raw amino-acid sequence, 704 residues long: Mannan-binding lectin serine protease 1 (704 aa).

Residues 1–24 form the signal peptide; the sequence is MRFLSFWRLLLYHALCLALPEVSA. Positions 25-143 constitute a CUB 1 domain; that stretch reads HTVELNEMFG…TGFDAHYMAV (119 aa). The tract at residues 25-189 is homodimerization; it reads HTVELNEMFG…HTDNRTCRVE (165 aa). The segment at 25 to 189 is interaction with MBL2; the sequence is HTVELNEMFG…HTDNRTCRVE (165 aa). Residues 25 to 283 form an interaction with FCN2 region; it reads HTVELNEMFG…STQTHSVQIL (259 aa). The interaction with MBL1 stretch occupies residues 25-305; the sequence is HTVELNEMFG…RLSYRAAGNE (281 aa). N54 is a glycosylation site (N-linked (GlcNAc...) asparagine). 7 residues coordinate Ca(2+): E73, D81, D126, S128, D144, V145, and E147. C78 and C96 are oxidised to a cystine. The EGF-like; calcium-binding domain maps to 144 to 187; it reads DVDECKEREDEELSCDHYCHNYIGGYYCSCRFGYILHTDNRTCR. Intrachain disulfides connect C148/C162, C158/C171, C173/C186, and C190/C217. Positions 164, 165, and 168 each coordinate Ca(2+). Residue N164 is modified to (3R)-3-hydroxyasparagine. N183 is a glycosylation site (N-linked (GlcNAc...) asparagine). The CUB 2 domain occupies 190-302; that stretch reads CSGNLFTQRT…RGWRLSYRAA (113 aa). Residues E240, D250, D287, and S289 each coordinate Ca(2+). C247 and C265 are disulfide-bonded. Sushi domains are found at residues 304 to 369 and 370 to 439; these read NECP…TCKI and VDCG…TCLP. Cystine bridges form between C306–C354, C334–C367, C372–C419, C402–C437, C441–C577, C480–C496, C619–C636, and C647–C677. 2 N-linked (GlcNAc...) asparagine glycosylation sites follow: N390 and N412. Positions 454-701 constitute a Peptidase S1 domain; the sequence is IFNGRPAQKG…NKDWIQRITG (248 aa). Catalysis depends on charge relay system residues H495 and D557. S651 acts as the Charge relay system in catalysis.

Belongs to the peptidase S1 family. As to quaternary structure, homodimer. Interacts with the oligomeric lectins MBL2, FCN2 and FCN3; triggers the lectin pathway of complement through activation of C3. Interacts with SERPING1. Interacts with COLEC11; probably triggers the lectin pathway of complement. The iron and 2-oxoglutarate dependent 3-hydroxylation of aspartate and asparagine is (R) stereospecific within EGF domains. In terms of processing, N-glycosylated. Some N-linked glycan are of the complex-type. Post-translationally, autoproteolytic processing of the proenzyme produces the active enzyme composed on the heavy and the light chain held together by a disulfide bond. Isoform 1 but not isoform 2 is activated through autoproteolytic processing. In terms of tissue distribution, protein of the plasma which is primarily expressed by liver.

The protein resides in the secreted. Inhibited by SERPING1 and A2M. Its function is as follows. Functions in the lectin pathway of complement, which performs a key role in innate immunity by recognizing pathogens through patterns of sugar moieties and neutralizing them. The lectin pathway is triggered upon binding of mannan-binding lectin (MBL) and ficolins to sugar moieties which leads to activation of the associated proteases MASP1 and MASP2. Functions as an endopeptidase and may activate MASP2 or C2 or directly activate C3 the key component of complement reaction. Isoform 2 may have an inhibitory effect on the activation of the lectin pathway of complement or may cleave IGFBP5. Also plays a role in development. This Mus musculus (Mouse) protein is Mannan-binding lectin serine protease 1 (Masp1).